Here is a 226-residue protein sequence, read N- to C-terminus: MNENLFASFAAPTILGLPAAVLIILFPPLLVPTSKHLINNRLITTQQWLIQLTSKQMMTMHNTKGRTWSLMLVSLIIFIATTNLLGLLPHSFTPTTQLSMNLAMAIPLWAGTVVMGFRFKTKNALAHFLPQGTPTPLIPMLIIIETISLFIQPMALAVRLTANITAGHLLMHLIGSATLALSTISLPSTLIIFTILILLTVLEIAVALIQAYVFTLLVSLYLHDNT.

Helical transmembrane passes span 6-26 (FASFAAPTILGLPAAVLIILF), 68-88 (WSLMLVSLIIFIATTNLLGLL), 97-117 (QLSMNLAMAIPLWAGTVVMGF), 138-158 (IPMLIIIETISLFIQPMALAV), 164-184 (ITAGHLLMHLIGSATLALSTI), and 189-209 (TLIIFTILILLTVLEIAVALI).

This sequence belongs to the ATPase A chain family. Component of the ATP synthase complex composed at least of ATP5F1A/subunit alpha, ATP5F1B/subunit beta, ATP5MC1/subunit c (homooctomer), MT-ATP6/subunit a, MT-ATP8/subunit 8, ATP5ME/subunit e, ATP5MF/subunit f, ATP5MG/subunit g, ATP5MK/subunit k, ATP5MJ/subunit j, ATP5F1C/subunit gamma, ATP5F1D/subunit delta, ATP5F1E/subunit epsilon, ATP5PF/subunit F6, ATP5PB/subunit b, ATP5PD/subunit d, ATP5PO/subunit OSCP. ATP synthase complex consists of a soluble F(1) head domain (subunits alpha(3) and beta(3)) - the catalytic core - and a membrane F(0) domain - the membrane proton channel (subunits c, a, 8, e, f, g, k and j). These two domains are linked by a central stalk (subunits gamma, delta, and epsilon) rotating inside the F1 region and a stationary peripheral stalk (subunits F6, b, d, and OSCP). Interacts with DNAJC30; interaction is direct.

It is found in the mitochondrion inner membrane. It carries out the reaction H(+)(in) = H(+)(out). Its function is as follows. Subunit a, of the mitochondrial membrane ATP synthase complex (F(1)F(0) ATP synthase or Complex V) that produces ATP from ADP in the presence of a proton gradient across the membrane which is generated by electron transport complexes of the respiratory chain. ATP synthase complex consist of a soluble F(1) head domain - the catalytic core - and a membrane F(1) domain - the membrane proton channel. These two domains are linked by a central stalk rotating inside the F(1) region and a stationary peripheral stalk. During catalysis, ATP synthesis in the catalytic domain of F(1) is coupled via a rotary mechanism of the central stalk subunits to proton translocation. With the subunit c (ATP5MC1), forms the proton-conducting channel in the F(0) domain, that contains two crucial half-channels (inlet and outlet) that facilitate proton movement from the mitochondrial intermembrane space (IMS) into the matrix. Protons are taken up via the inlet half-channel and released through the outlet half-channel, following a Grotthuss mechanism. The sequence is that of ATP synthase F(0) complex subunit a from Pan paniscus (Pygmy chimpanzee).